The sequence spans 318 residues: Methionyl-tRNA formyltransferase (318 aa).

117–120 (SLLP) is a (6S)-5,6,7,8-tetrahydrofolate binding site.

Belongs to the Fmt family.

The enzyme catalyses L-methionyl-tRNA(fMet) + (6R)-10-formyltetrahydrofolate = N-formyl-L-methionyl-tRNA(fMet) + (6S)-5,6,7,8-tetrahydrofolate + H(+). Its function is as follows. Attaches a formyl group to the free amino group of methionyl-tRNA(fMet). The formyl group appears to play a dual role in the initiator identity of N-formylmethionyl-tRNA by promoting its recognition by IF2 and preventing the misappropriation of this tRNA by the elongation apparatus. This Malacoplasma penetrans (strain HF-2) (Mycoplasma penetrans) protein is Methionyl-tRNA formyltransferase.